We begin with the raw amino-acid sequence, 212 residues long: Guanylate kinase (212 aa).

A Guanylate kinase-like domain is found at 7-187 (GLLIVLSGPS…AADRIIAIIR (181 aa)). 14-21 (GPSGVGKA) serves as a coordination point for ATP.

Belongs to the guanylate kinase family.

Its subcellular location is the cytoplasm. The enzyme catalyses GMP + ATP = GDP + ADP. Its function is as follows. Essential for recycling GMP and indirectly, cGMP. This chain is Guanylate kinase, found in Onion yellows phytoplasma (strain OY-M).